The primary structure comprises 106 residues: uncharacterized protein (106 aa).

This is an uncharacterized protein from Homo sapiens (Human).